The primary structure comprises 161 residues: Allophycocyanin alpha chain (161 aa).

At Asn-71 the chain carries N4-methylasparagine. Cys-81 contributes to the (2R,3E)-phycocyanobilin binding site.

This sequence belongs to the phycobiliprotein family. As to quaternary structure, heterodimer of an alpha and a beta chain. Contains one covalently linked phycocyanobilin chromophore.

Its subcellular location is the plastid. The protein localises to the chloroplast thylakoid membrane. Functionally, light-harvesting photosynthetic bile pigment-protein from the phycobiliprotein complex. Allophycocyanin has a maximum absorption at approximately 650 nanometers. In Aglaothamnion neglectum (Red alga), this protein is Allophycocyanin alpha chain (apcA).